Here is a 60-residue protein sequence, read N- to C-terminus: Insect toxin mu-NPTX-Nc1a (60 aa).

The N-terminal stretch at 1–19 (MIYQVVLLLLVSPAPVSAA) is a signal peptide.

Post-translationally, contains 4 disulfide bonds. In terms of tissue distribution, expressed by the venom gland.

It is found in the secreted. In terms of biological role, insect-specific toxin. Blocks voltage-gated potassium and sodium channels. The polypeptide is Insect toxin mu-NPTX-Nc1a (Trichonephila clavata (Joro spider)).